The sequence spans 34 residues: Potassium channel toxin (34 aa).

3 disulfide bridges follow: C6–C25, C11–C29, and C15–C31.

This sequence belongs to the short scorpion toxin superfamily. Potassium channel inhibitor family. Alpha-KTx 21 subfamily. In terms of tissue distribution, expressed by the venom gland.

The protein resides in the secreted. Its function is as follows. Toxin that blocks voltage-gated potassium channels (Kv). The sequence is that of Potassium channel toxin from Tityus metuendus (Scorpion).